The chain runs to 277 residues: Putative phosphoenolpyruvate synthase regulatory protein (277 aa).

Residue 157–164 (GVSRCGKT) coordinates ADP.

The protein belongs to the pyruvate, phosphate/water dikinase regulatory protein family. PSRP subfamily.

It carries out the reaction [pyruvate, water dikinase] + ADP = [pyruvate, water dikinase]-phosphate + AMP + H(+). The catalysed reaction is [pyruvate, water dikinase]-phosphate + phosphate + H(+) = [pyruvate, water dikinase] + diphosphate. In terms of biological role, bifunctional serine/threonine kinase and phosphorylase involved in the regulation of the phosphoenolpyruvate synthase (PEPS) by catalyzing its phosphorylation/dephosphorylation. The sequence is that of Putative phosphoenolpyruvate synthase regulatory protein from Klebsiella pneumoniae subsp. pneumoniae (strain ATCC 700721 / MGH 78578).